The sequence spans 308 residues: D-alanine--D-alanine ligase B (308 aa).

The ATP-grasp domain maps to 102-302; sequence KKIVKTVGVP…FGELLSWMVE (201 aa). 128–183 contributes to the ATP binding site; sequence PMKPPYVIKPVNEGSSFGVVIVSEGQSHPPQVVGSSEWKYGDTVMVERYIHGRELT. Positions 252, 269, and 271 each coordinate Mg(2+).

It belongs to the D-alanine--D-alanine ligase family. Mg(2+) serves as cofactor. The cofactor is Mn(2+).

Its subcellular location is the cytoplasm. It catalyses the reaction 2 D-alanine + ATP = D-alanyl-D-alanine + ADP + phosphate + H(+). It participates in cell wall biogenesis; peptidoglycan biosynthesis. Functionally, cell wall formation. The sequence is that of D-alanine--D-alanine ligase B from Mesorhizobium japonicum (strain LMG 29417 / CECT 9101 / MAFF 303099) (Mesorhizobium loti (strain MAFF 303099)).